A 427-amino-acid chain; its full sequence is 3-phosphoshikimate 1-carboxyvinyltransferase (427 aa).

Residues Lys-20, Ser-21, and Arg-25 each contribute to the 3-phosphoshikimate site. Phosphoenolpyruvate is bound at residue Lys-20. 2 residues coordinate phosphoenolpyruvate: Gly-92 and Arg-120. 4 residues coordinate 3-phosphoshikimate: Ser-166, Gln-168, Asp-312, and Lys-339. Position 168 (Gln-168) interacts with phosphoenolpyruvate. Residue Asp-312 is the Proton acceptor of the active site. Phosphoenolpyruvate is bound by residues Arg-343 and Arg-385.

Belongs to the EPSP synthase family. Monomer.

It localises to the cytoplasm. It catalyses the reaction 3-phosphoshikimate + phosphoenolpyruvate = 5-O-(1-carboxyvinyl)-3-phosphoshikimate + phosphate. It functions in the pathway metabolic intermediate biosynthesis; chorismate biosynthesis; chorismate from D-erythrose 4-phosphate and phosphoenolpyruvate: step 6/7. Catalyzes the transfer of the enolpyruvyl moiety of phosphoenolpyruvate (PEP) to the 5-hydroxyl of shikimate-3-phosphate (S3P) to produce enolpyruvyl shikimate-3-phosphate and inorganic phosphate. This Streptococcus uberis (strain ATCC BAA-854 / 0140J) protein is 3-phosphoshikimate 1-carboxyvinyltransferase.